Here is a 167-residue protein sequence, read N- to C-terminus: Leptin (167 aa).

Positions 1-21 are cleaved as a signal peptide; sequence MRCGSLCRFLWLWSCLPYIEA. An intrachain disulfide couples Cys-117 to Cys-167.

It belongs to the leptin family.

Its subcellular location is the secreted. Key player in the regulation of energy balance and body weight control. Once released into the circulation, has central and peripheral effects by binding LEPR, found in many tissues, which results in the activation of several major signaling pathways. In the hypothalamus, acts as an appetite-regulating factor that induces a decrease in food intake and an increase in energy consumption by inducing anorexinogenic factors and suppressing orexigenic neuropeptides, also regulates bone mass and secretion of hypothalamo-pituitary-adrenal hormones. In the periphery, increases basal metabolism, influences reproductive function, regulates pancreatic beta-cell function and insulin secretion, is pro-angiogenic for endothelial cell and affects innate and adaptive immunity. In the arcuate nucleus of the hypothalamus, activates by depolarization POMC neurons inducing FOS and SOCS3 expression to release anorexigenic peptides and inhibits by hyperpolarization NPY neurons inducing SOCS3 with a consequent reduction on release of orexigenic peptides. In addition to its known satiety inducing effect, has a modulatory role in nutrient absorption. In the intestine, reduces glucose absorption by enterocytes by activating PKC and leading to a sequential activation of p38, PI3K and ERK signaling pathways which exerts an inhibitory effect on glucose absorption. Acts as a growth factor on certain tissues, through the activation of different signaling pathways increases expression of genes involved in cell cycle regulation such as CCND1, via JAK2-STAT3 pathway, or VEGFA, via MAPK1/3 and PI3K-AKT1 pathways. May also play an apoptotic role via JAK2-STAT3 pathway and up-regulation of BIRC5 expression. Pro-angiogenic, has mitogenic activity on vascular endothelial cells and plays a role in matrix remodeling by regulating the expression of matrix metalloproteinases (MMPs) and tissue inhibitors of metalloproteinases (TIMPs). In innate immunity, modulates the activity and function of neutrophils by increasing chemotaxis and the secretion of oxygen radicals. Increases phagocytosis by macrophages and enhances secretion of pro-inflammatory mediators. Increases cytotoxic ability of NK cells. Plays a pro-inflammatory role, in synergy with IL1B, by inducing NOS2 which promotes the production of IL6, IL8 and Prostaglandin E2, through a signaling pathway that involves JAK2, PI3K, MAP2K1/MEK1 and MAPK14/p38. In adaptive immunity, promotes the switch of memory T-cells towards T helper-1 cell immune responses. Increases CD4(+)CD25(-) T-cell proliferation and reduces autophagy during TCR (T-cell receptor) stimulation, through MTOR signaling pathway activation and BCL2 up-regulation. The chain is Leptin (LEP) from Halichoerus grypus (Gray seal).